We begin with the raw amino-acid sequence, 268 residues long: Chymotrypsin-C (268 aa).

The signal sequence occupies residues 1–16 (MLGITVFTTFLAYASS). Residues 17–29 (CGAPIFQPNLSAR) constitute a propeptide, activation peptide. 5 disulfide bridges follow: cysteine 17/cysteine 141, cysteine 59/cysteine 75, cysteine 155/cysteine 222, cysteine 186/cysteine 202, and cysteine 212/cysteine 243. Asparagine 25 is a glycosylation site (N-linked (GlcNAc...) asparagine). Positions 30-268 (VVGGEDAIPH…IDWINQKLQL (239 aa)) constitute a Peptidase S1 domain. Active-site charge relay system residues include histidine 74 and aspartate 121. Serine 216 (charge relay system) is an active-site residue.

It belongs to the peptidase S1 family. Elastase subfamily. As to quaternary structure, monomer. The zymogen is secreted as a ternary complex composed of procarboxypeptidase A, chymotrypsinogen C and proproteinase E. As to expression, pancreas.

The protein resides in the secreted. It localises to the extracellular space. It carries out the reaction Preferential cleavage: Leu-|-Xaa, Tyr-|-Xaa, Phe-|-Xaa, Met-|-Xaa, Trp-|-Xaa, Gln-|-Xaa, Asn-|-Xaa.. Its function is as follows. Regulates activation and degradation of trypsinogens and procarboxypeptidases by targeting specific cleavage sites within their zymogen precursors. Has chymotrypsin-type protease activity and hypocalcemic activity. The polypeptide is Chymotrypsin-C (CTRC) (Bos taurus (Bovine)).